The following is a 488-amino-acid chain: Probable glycine dehydrogenase (decarboxylating) subunit 2 (488 aa).

Lysine 274 is subject to N6-(pyridoxal phosphate)lysine.

Belongs to the GcvP family. C-terminal subunit subfamily. In terms of assembly, the glycine cleavage system is composed of four proteins: P, T, L and H. In this organism, the P 'protein' is a heterodimer of two subunits. It depends on pyridoxal 5'-phosphate as a cofactor.

It carries out the reaction N(6)-[(R)-lipoyl]-L-lysyl-[glycine-cleavage complex H protein] + glycine + H(+) = N(6)-[(R)-S(8)-aminomethyldihydrolipoyl]-L-lysyl-[glycine-cleavage complex H protein] + CO2. Its function is as follows. The glycine cleavage system catalyzes the degradation of glycine. The P protein binds the alpha-amino group of glycine through its pyridoxal phosphate cofactor; CO(2) is released and the remaining methylamine moiety is then transferred to the lipoamide cofactor of the H protein. This Listeria welshimeri serovar 6b (strain ATCC 35897 / DSM 20650 / CCUG 15529 / CIP 8149 / NCTC 11857 / SLCC 5334 / V8) protein is Probable glycine dehydrogenase (decarboxylating) subunit 2.